A 222-amino-acid chain; its full sequence is DnaJ homolog subfamily B member 9 (222 aa).

A signal peptide spans 1–23; it reads MATPQSVFVFAICILMITELILA. The J domain maps to 26–90; sequence SYYDILGVPK…HRRKEYDTVG (65 aa). Residues 91 to 222 are divergent targeting domain; that stretch reads HTAFTNGKGQ…VTTYTDCSGQ (132 aa). S133 is modified (phosphoserine).

Interacts with HSPA5/BiP; interaction is direct. Interacts with ERN1/IRE1 (via the luminal region). Interacts with DERL1.

It is found in the endoplasmic reticulum lumen. Co-chaperone for Hsp70 protein HSPA5/BiP that acts as a key repressor of the ERN1/IRE1-mediated unfolded protein response (UPR). J domain-containing co-chaperones stimulate the ATPase activity of Hsp70 proteins and are required for efficient substrate recognition by Hsp70 proteins. In the unstressed endoplasmic reticulum, interacts with the luminal region of ERN1/IRE1 and selectively recruits HSPA5/BiP: HSPA5/BiP disrupts the dimerization of the active ERN1/IRE1 luminal region, thereby inactivating ERN1/IRE1. Also involved in endoplasmic reticulum-associated degradation (ERAD) of misfolded proteins. Required for survival of B-cell progenitors and normal antibody production. This chain is DnaJ homolog subfamily B member 9, found in Cricetulus griseus (Chinese hamster).